Here is a 174-residue protein sequence, read N- to C-terminus: Solute carrier family 2, facilitated glucose transporter member 4 (174 aa).

Residues 1–19 (QQIGSEDGEPPQQRVTGTL) are Cytoplasmic-facing. The segment at 2 to 8 (QIGSEDG) is interaction with SRFBP1. Serine 5 is modified (phosphoserine). Residues 20–40 (VLAVFSAVLGSLQFGYNIGVI) traverse the membrane as a helical segment. Topologically, residues 41-76 (NAPQKVIEQSYNETWLGRQGPNGPGSIPPGTLTTLW) are extracellular. The N-linked (GlcNAc...) asparagine glycan is linked to asparagine 52. Residues 77-97 (ALSVAIFSVGGMFSSFLLGII) traverse the membrane as a helical segment. Topologically, residues 98–114 (SQWLGRKKAMLFNNTLA) are cytoplasmic. The chain crosses the membrane as a helical span at residues 115-135 (VLAGALMGLAKAAASYEMLIL). The Extracellular segment spans residues 136-137 (GR). The helical transmembrane segment at 138-158 (FLIGAYSGLASGLVPMYVGEI) threads the bilayer. Residues 159–166 (APTHLRGA) are Cytoplasmic-facing. Residues 167–174 (LGTLNQLA) traverse the membrane as a helical segment.

This sequence belongs to the major facilitator superfamily. Sugar transporter (TC 2.A.1.1) family. Glucose transporter subfamily. In terms of assembly, binds to DAXX. Interacts via its N-terminus with SRFBP1. Interacts with NDUFA9. Interacts with TRARG1; the interaction is required for proper SLC2A4 recycling after insulin stimulation. Post-translationally, sumoylated. In terms of processing, palmitoylated. Palmitoylation by ZDHHC7 controls the insulin-dependent translocation of GLUT4 to the plasma membrane.

The protein resides in the cell membrane. Its subcellular location is the endomembrane system. The protein localises to the cytoplasm. It localises to the perinuclear region. The catalysed reaction is D-glucose(out) = D-glucose(in). Its function is as follows. Insulin-regulated facilitative glucose transporter, which plays a key role in removal of glucose from circulation. Response to insulin is regulated by its intracellular localization: in the absence of insulin, it is efficiently retained intracellularly within storage compartments in muscle and fat cells. Upon insulin stimulation, translocates from these compartments to the cell surface where it transports glucose from the extracellular milieu into the cell. This Sus scrofa (Pig) protein is Solute carrier family 2, facilitated glucose transporter member 4.